The primary structure comprises 763 residues: Amine oxidase [copper-containing] 3 (763 aa).

Topologically, residues 2–6 (TQKTT) are cytoplasmic. Residues 7-27 (LVLLALAVITIFALVCVLLAG) form a helical; Signal-anchor for type II membrane protein membrane-spanning segment. The Extracellular segment spans residues 28-763 (RSGDGGRLSQ…AFSHGGFTYK (736 aa)). N-linked (GlcNAc...) asparagine glycosylation occurs at Asn137. Residues Cys198 and Cys199 are joined by a disulfide bond. Residues Asn232 and Asn294 are each glycosylated (N-linked (GlcNAc...) asparagine). Residue Asp386 is the Proton acceptor of the active site. Residues Cys404 and Cys430 are joined by a disulfide bond. The Schiff-base intermediate with substrate; via topaquinone role is filled by Tyr471. Tyr471 bears the 2',4',5'-topaquinone mark. Cu(2+) is bound by residues His520 and His522. Asp529, Leu530, Asp531, and Glu572 together coordinate Ca(2+). Asn581 and Asn592 each carry an N-linked (GlcNAc...) asparagine glycan. 2 residues coordinate Ca(2+): Glu641 and Phe663. Asn666 carries an N-linked (GlcNAc...) asparagine glycan. The Ca(2+) site is built by Glu667, Asp673, and Leu674. His684 serves as a coordination point for Cu(2+). Cysteines 734 and 741 form a disulfide.

The protein belongs to the copper/topaquinone oxidase family. In terms of assembly, homodimer; disulfide-linked. Probably forms heterodimers with AOC2. Requires Cu(2+) as cofactor. The cofactor is Ca(2+). L-topaquinone is required as a cofactor. In terms of processing, topaquinone (TPQ) is generated by copper-dependent autoxidation of a specific tyrosyl residue. Post-translationally, N- and O-glycosylated. As to expression, highly expressed in adipocytes, aorta and lung. Expressed at lower levels in heart, kidney, large intestine, liver, small intestine and stomach.

It is found in the cell membrane. The enzyme catalyses methylamine + O2 + H2O = formaldehyde + H2O2 + NH4(+). It catalyses the reaction benzylamine + O2 + H2O = benzaldehyde + H2O2 + NH4(+). It carries out the reaction 2-phenylethylamine + O2 + H2O = 2-phenylacetaldehyde + H2O2 + NH4(+). Catalyzes the oxidative deamination of primary amines to the corresponding aldehydes with the concomitant production of hydrogen peroxide and ammonia. Has a preference for the primary monoamines methylamine and benzylamine. Could also act on 2-phenylethylamine but much less efficiently. At endothelial cells surface can also function as a cell adhesion protein that participates in lymphocyte extravasation and recirculation by mediating the binding of lymphocytes to peripheral lymph node vascular endothelial cells in an L-selectin-independent fashion. The chain is Amine oxidase [copper-containing] 3 from Rattus norvegicus (Rat).